We begin with the raw amino-acid sequence, 201 residues long: Large ribosomal subunit protein uL4 (201 aa).

The interval 44 to 73 (RAQKSRAEVKASRKKPWRQKGTGRARAGSV) is disordered. Over residues 55 to 66 (SRKKPWRQKGTG) the composition is skewed to basic residues.

It belongs to the universal ribosomal protein uL4 family. Part of the 50S ribosomal subunit.

Functionally, one of the primary rRNA binding proteins, this protein initially binds near the 5'-end of the 23S rRNA. It is important during the early stages of 50S assembly. It makes multiple contacts with different domains of the 23S rRNA in the assembled 50S subunit and ribosome. Its function is as follows. Forms part of the polypeptide exit tunnel. This is Large ribosomal subunit protein uL4 from Hamiltonella defensa subsp. Acyrthosiphon pisum (strain 5AT).